The sequence spans 190 residues: ATP synthase subunit delta (190 aa).

It belongs to the ATPase delta chain family. As to quaternary structure, F-type ATPases have 2 components, F(1) - the catalytic core - and F(0) - the membrane proton channel. F(1) has five subunits: alpha(3), beta(3), gamma(1), delta(1), epsilon(1). F(0) has three main subunits: a(1), b(2) and c(10-14). The alpha and beta chains form an alternating ring which encloses part of the gamma chain. F(1) is attached to F(0) by a central stalk formed by the gamma and epsilon chains, while a peripheral stalk is formed by the delta and b chains.

It is found in the cell inner membrane. F(1)F(0) ATP synthase produces ATP from ADP in the presence of a proton or sodium gradient. F-type ATPases consist of two structural domains, F(1) containing the extramembraneous catalytic core and F(0) containing the membrane proton channel, linked together by a central stalk and a peripheral stalk. During catalysis, ATP synthesis in the catalytic domain of F(1) is coupled via a rotary mechanism of the central stalk subunits to proton translocation. Functionally, this protein is part of the stalk that links CF(0) to CF(1). It either transmits conformational changes from CF(0) to CF(1) or is implicated in proton conduction. The sequence is that of ATP synthase subunit delta from Methylobacterium radiotolerans (strain ATCC 27329 / DSM 1819 / JCM 2831 / NBRC 15690 / NCIMB 10815 / 0-1).